A 248-amino-acid polypeptide reads, in one-letter code: Probable transcriptional regulatory protein Oant_1200 (248 aa).

This sequence belongs to the TACO1 family.

Its subcellular location is the cytoplasm. The sequence is that of Probable transcriptional regulatory protein Oant_1200 from Brucella anthropi (strain ATCC 49188 / DSM 6882 / CCUG 24695 / JCM 21032 / LMG 3331 / NBRC 15819 / NCTC 12168 / Alc 37) (Ochrobactrum anthropi).